The chain runs to 768 residues: Lon protease (768 aa).

The Lon N-terminal domain maps to alanine 4 to methionine 198. Glycine 349 to threonine 356 lines the ATP pocket. One can recognise a Lon proteolytic domain in the interval threonine 586 to lysine 768. Residues serine 674 and lysine 717 contribute to the active site.

The protein belongs to the peptidase S16 family. Homohexamer. Organized in a ring with a central cavity.

The protein localises to the cytoplasm. The enzyme catalyses Hydrolysis of proteins in presence of ATP.. In terms of biological role, ATP-dependent serine protease that mediates the selective degradation of mutant and abnormal proteins as well as certain short-lived regulatory proteins. Required for cellular homeostasis and for survival from DNA damage and developmental changes induced by stress. Degrades polypeptides processively to yield small peptide fragments that are 5 to 10 amino acids long. Binds to DNA in a double-stranded, site-specific manner. This chain is Lon protease, found in Fusobacterium nucleatum subsp. nucleatum (strain ATCC 25586 / DSM 15643 / BCRC 10681 / CIP 101130 / JCM 8532 / KCTC 2640 / LMG 13131 / VPI 4355).